Here is a 251-residue protein sequence, read N- to C-terminus: Imidazole glycerol phosphate synthase subunit HisF (251 aa).

Catalysis depends on residues D11 and D130.

The protein belongs to the HisA/HisF family. Heterodimer of HisH and HisF.

It is found in the cytoplasm. The enzyme catalyses 5-[(5-phospho-1-deoxy-D-ribulos-1-ylimino)methylamino]-1-(5-phospho-beta-D-ribosyl)imidazole-4-carboxamide + L-glutamine = D-erythro-1-(imidazol-4-yl)glycerol 3-phosphate + 5-amino-1-(5-phospho-beta-D-ribosyl)imidazole-4-carboxamide + L-glutamate + H(+). It functions in the pathway amino-acid biosynthesis; L-histidine biosynthesis; L-histidine from 5-phospho-alpha-D-ribose 1-diphosphate: step 5/9. In terms of biological role, IGPS catalyzes the conversion of PRFAR and glutamine to IGP, AICAR and glutamate. The HisF subunit catalyzes the cyclization activity that produces IGP and AICAR from PRFAR using the ammonia provided by the HisH subunit. In Chlorobium chlorochromatii (strain CaD3), this protein is Imidazole glycerol phosphate synthase subunit HisF.